The chain runs to 156 residues: Ribosomal RNA large subunit methyltransferase H (156 aa).

S-adenosyl-L-methionine-binding positions include L73, G104, and 123–128; that span reads LGALTL.

Belongs to the RNA methyltransferase RlmH family. In terms of assembly, homodimer.

It localises to the cytoplasm. It catalyses the reaction pseudouridine(1915) in 23S rRNA + S-adenosyl-L-methionine = N(3)-methylpseudouridine(1915) in 23S rRNA + S-adenosyl-L-homocysteine + H(+). In terms of biological role, specifically methylates the pseudouridine at position 1915 (m3Psi1915) in 23S rRNA. The chain is Ribosomal RNA large subunit methyltransferase H from Dichelobacter nodosus (strain VCS1703A).